The chain runs to 309 residues: Olfactory receptor 7A10 (309 aa).

At 1 to 25 (MKSWNNTIILEFLLLGISEEPELQA) the chain is on the extracellular side. An N-linked (GlcNAc...) asparagine glycan is attached at Asn5. The chain crosses the membrane as a helical span at residues 26 to 46 (FLFGLFLSMYLVTVLGNLLII). Over 47–54 (LATISDSH) the chain is Cytoplasmic. The helical transmembrane segment at 55–75 (LHTPMYFFLSNLSFVDICFVS) threads the bilayer. Over 76–99 (TTVPKMLVNIQTHNKVITYAGCIT) the chain is Extracellular. A disulfide bridge connects residues Cys97 and Cys189. A helical membrane pass occupies residues 100–120 (QMCFFLLFVGLDNFLLTVMAY). The Cytoplasmic segment spans residues 121-139 (DRFVAICHPLHYMVIMNPQ). A helical transmembrane segment spans residues 140–160 (LCGLLVLASWIMSVLNSMLQS). Over 161-197 (LMVLPLPFCTHMEIPHFFCEINQVVHLACSDTFLNDI) the chain is Extracellular. Residues 198 to 217 (VMYFAVALLGGGPLTGILYS) form a helical membrane-spanning segment. Residues 218–237 (YSKIVSSIRAISSAQGKYKA) are Cytoplasmic-facing. A helical transmembrane segment spans residues 238-258 (FSTCASHLSVVSLFYGTCLGV). Topologically, residues 259-271 (YLSSAATHNSHTG) are extracellular. The chain crosses the membrane as a helical span at residues 272-292 (AAASVMYTVVTPMLNPFIYSL). Residues 293 to 309 (RNKHIKGAMKTFFRGKQ) lie on the Cytoplasmic side of the membrane.

It belongs to the G-protein coupled receptor 1 family.

The protein resides in the cell membrane. In terms of biological role, odorant receptor. The protein is Olfactory receptor 7A10 (OR7A10) of Homo sapiens (Human).